The sequence spans 880 residues: Translation initiation factor IF-2 (880 aa).

The disordered stretch occupies residues 1 to 251; it reads MVDTKNPGDK…PTAKPAPAKQ (251 aa). A compositionally biased stretch (low complexity) spans 58–79; the sequence is PADAPAAPAPVAAAKPAPVRAP. Basic and acidic residues predominate over residues 115-183; the sequence is ARIRDEEERK…KRFGEEEAKK (69 aa). 2 stretches are compositionally biased toward low complexity: residues 184 to 215 and 233 to 250; these read AAAA…VAAD and AARP…APAK. Residues 376–547 form the tr-type G domain; it reads PRSPVVTVMG…ALQAELLDLK (172 aa). The G1 stretch occupies residues 385–392; that stretch reads GHVDHGKT. Position 385–392 (385–392) interacts with GTP; it reads GHVDHGKT. The segment at 410–414 is G2; the sequence is GITQH. The tract at residues 433–436 is G3; it reads DTPG. GTP is bound by residues 433–437 and 487–490; these read DTPGH and NKID. The segment at 487 to 490 is G4; the sequence is NKID. Residues 523-525 form a G5 region; that stretch reads SAK.

It belongs to the TRAFAC class translation factor GTPase superfamily. Classic translation factor GTPase family. IF-2 subfamily.

It localises to the cytoplasm. Its function is as follows. One of the essential components for the initiation of protein synthesis. Protects formylmethionyl-tRNA from spontaneous hydrolysis and promotes its binding to the 30S ribosomal subunits. Also involved in the hydrolysis of GTP during the formation of the 70S ribosomal complex. The protein is Translation initiation factor IF-2 of Rhodopseudomonas palustris (strain BisB18).